The sequence spans 414 residues: Multifunctional CCA protein (414 aa).

The ATP site is built by Gly-8 and Arg-11. Positions 8 and 11 each coordinate CTP. 2 residues coordinate Mg(2+): Asp-21 and Asp-23. ATP-binding residues include Arg-91, Arg-143, and Arg-146. CTP contacts are provided by Arg-91, Arg-143, and Arg-146. One can recognise an HD domain in the interval 232–333 (TGVHVMMVID…TRLVERCDAL (102 aa)).

It belongs to the tRNA nucleotidyltransferase/poly(A) polymerase family. Bacterial CCA-adding enzyme type 1 subfamily. As to quaternary structure, monomer. Can also form homodimers and oligomers. Mg(2+) is required as a cofactor. Requires Ni(2+) as cofactor.

It catalyses the reaction a tRNA precursor + 2 CTP + ATP = a tRNA with a 3' CCA end + 3 diphosphate. The enzyme catalyses a tRNA with a 3' CCA end + 2 CTP + ATP = a tRNA with a 3' CCACCA end + 3 diphosphate. Functionally, catalyzes the addition and repair of the essential 3'-terminal CCA sequence in tRNAs without using a nucleic acid template. Adds these three nucleotides in the order of C, C, and A to the tRNA nucleotide-73, using CTP and ATP as substrates and producing inorganic pyrophosphate. tRNA 3'-terminal CCA addition is required both for tRNA processing and repair. Also involved in tRNA surveillance by mediating tandem CCA addition to generate a CCACCA at the 3' terminus of unstable tRNAs. While stable tRNAs receive only 3'-terminal CCA, unstable tRNAs are marked with CCACCA and rapidly degraded. This is Multifunctional CCA protein from Cupriavidus metallidurans (strain ATCC 43123 / DSM 2839 / NBRC 102507 / CH34) (Ralstonia metallidurans).